The following is a 192-amino-acid chain: Mediator of RNA polymerase II transcription subunit 29 (192 aa).

The tract at residues 32–51 (MQQQSPQQMQPAPVPQQTQQ) is disordered.

This sequence belongs to the Mediator complex subunit 29 family. In terms of assembly, component of the Mediator complex.

It localises to the nucleus. Functionally, component of the Mediator complex, a coactivator involved in the regulated transcription of nearly all RNA polymerase II-dependent genes. Mediator functions as a bridge to convey information from gene-specific regulatory proteins to the basal RNA polymerase II transcription machinery. Mediator is recruited to promoters by direct interactions with regulatory proteins and serves as a scaffold for the assembly of a functional preinitiation complex with RNA polymerase II and the general transcription factors. The sequence is that of Mediator of RNA polymerase II transcription subunit 29 (ix) from Bombyx mori (Silk moth).